A 314-amino-acid polypeptide reads, in one-letter code: Small glutamine-rich tetratricopeptide repeat-containing protein alpha (314 aa).

The tract at residues 65–99 (ATASKEMPQDPRGPDRTPPSEEDSAEAERLKTEGN) is disordered. Basic and acidic residues predominate over residues 71 to 83 (MPQDPRGPDRTPP). Threonine 81 bears the Phosphothreonine mark. Serine 84 carries the phosphoserine modification. A compositionally biased stretch (basic and acidic residues) spans 90–99 (EAERLKTEGN). TPR repeat units lie at residues 91 to 124 (AERL…NPAN), 125 to 158 (AVYF…DPGY), and 159 to 192 (SKAY…DPDN). Lysine 137 is subject to N6-acetyllysine. The segment at 249-268 (GMISGGHNPLGTPGSSPQHS) is disordered. Serine 302 is subject to Phosphoserine. A Phosphothreonine modification is found at threonine 304. Position 306 is a phosphoserine (serine 306).

Belongs to the SGT family. In terms of assembly, homodimer. Homooligomer. Interacts with DNAJC5 and DNAJC5B. Interacts (via TPR repeats) with HSP90AA1. Interacts (via Gln-rich region) with SLC2A1. Interacts with HSP90AB1. Interacts (via TPR repeats) with HSPA8/Hsc70; the interaction is direct. Interacts with BAG6 (via ubiquitin-like domain); interaction prevents interaction between BAG6 and RNF126. Forms a multiprotein complex, at least composed of DNAJB12, DNAJB14, HSPA8/Hsc70 and SGTA; interaction with DNAJB14 and HSPA8/Hsc70 is direct. As to quaternary structure, (Microbial infection) Interacts with NS1 from parvovirus H-1. Ubiquitously expressed.

The protein resides in the cytoplasm. It localises to the nucleus. In terms of biological role, co-chaperone that binds misfolded and hydrophobic patches-containing client proteins in the cytosol. Mediates their targeting to the endoplasmic reticulum but also regulates their sorting to the proteasome when targeting fails. Functions in tail-anchored/type II transmembrane proteins membrane insertion constituting with ASNA1 and the BAG6 complex a targeting module. Functions upstream of the BAG6 complex and ASNA1, binding more rapidly the transmembrane domain of newly synthesized proteins. It is also involved in the regulation of the endoplasmic reticulum-associated misfolded protein catabolic process via its interaction with BAG6: collaborates with the BAG6 complex to maintain hydrophobic substrates in non-ubiquitinated states. Competes with RNF126 for interaction with BAG6, preventing the ubiquitination of client proteins associated with the BAG6 complex. Binds directly to HSC70 and HSP70 and regulates their ATPase activity. The protein is Small glutamine-rich tetratricopeptide repeat-containing protein alpha (Sgta) of Rattus norvegicus (Rat).